Here is a 180-residue protein sequence, read N- to C-terminus: Large ribosomal subunit protein uL6 (180 aa).

Belongs to the universal ribosomal protein uL6 family. As to quaternary structure, part of the 50S ribosomal subunit.

This protein binds to the 23S rRNA, and is important in its secondary structure. It is located near the subunit interface in the base of the L7/L12 stalk, and near the tRNA binding site of the peptidyltransferase center. The chain is Large ribosomal subunit protein uL6 from Mesoplasma florum (strain ATCC 33453 / NBRC 100688 / NCTC 11704 / L1) (Acholeplasma florum).